The following is a 186-amino-acid chain: Translation initiation factor IF-3 (186 aa).

The tract at residues 1-20 is disordered; sequence MINRNSGKDRDRSRSGDKEL.

Belongs to the IF-3 family. Monomer.

The protein resides in the cytoplasm. Functionally, IF-3 binds to the 30S ribosomal subunit and shifts the equilibrium between 70S ribosomes and their 50S and 30S subunits in favor of the free subunits, thus enhancing the availability of 30S subunits on which protein synthesis initiation begins. The sequence is that of Translation initiation factor IF-3 from Borrelia duttonii (strain Ly).